Here is a 588-residue protein sequence, read N- to C-terminus: MATATPVQQQRAGSRASAPATPLSPTRLSRLQEKEELRELNDRLAVYIDKVRSLETENSALQLQVTEREEVRGRELTGLKALYETELADARRALDDTARERAKLQIELGKFKAEHDQLLLNYAKKESDLSGAQIKLREYEAALNSKDAALATALGDKKSLEGDLEDLKDQIAQLEASLSAAKKQLADETLLKVDLENRCQSLTEDLEFRKNMYEEEINETRRKHETRLVEVDSGRQIEYEYKLAQALHEMREQHDAQVRLYKEELEQTYHAKLENARLSSEMNTSTVNSAREELMESRMRIESLSSQLSNLQKESRACLERIQELEDMLAKERDNSRRMLSDREREMAEIRDQMQQQLSDYEQLLDVKLALDMEISAYRKLLEGEEERLKLSPSPSSRVTVSRASSSRSVRTTRGKRKRVDVEESEASSSVSISHSASATGNVCIEEIDVDGKFIRLKNTSEQDQPMGGWEMIRKIGDTSVSYKYTSRYVLKAGQTVTVWAANAGVTASPPTDLIWKNQNSWGTGEDVKVILKNSQGEEVAQRSTVFKTTIPEEEEEEEEEPIGVAVEEERFHQQGAPRASNKSCAIM.

The segment covering methionine 1–alanine 12 has biased composition (polar residues). Residues methionine 1–lysine 34 are disordered. Position 2 is an N-acetylalanine (alanine 2). Residues alanine 2 to glutamate 35 are head. Phosphothreonine is present on residues threonine 3 and threonine 5. An Omega-N-methylarginine modification is found at arginine 15. Phosphoserine is present on serine 17. Threonine 21 is subject to Phosphothreonine. A Phosphoserine modification is found at serine 24. Threonine 26 is subject to Phosphothreonine. Serine 29 carries the phosphoserine modification. Residues glutamate 33 to leucine 389 form the IF rod domain. The segment at glutamate 36–glutamate 70 is coil 1A. Positions valine 71 to leucine 82 are linker 1. The segment at tyrosine 83–glutamate 216 is coil 1B. Lysine 103 is covalently cross-linked (Glycyl lysine isopeptide (Lys-Gly) (interchain with G-Cter in SUMO2)). Lysine 112 carries the post-translational modification N6-acetyllysine. A Glycyl lysine isopeptide (Lys-Gly) (interchain with G-Cter in SUMO2) cross-link involves residue lysine 124. Serine 127 carries the phosphoserine modification. A Glycyl lysine isopeptide (Lys-Gly) (interchain with G-Cter in SUMO2) cross-link involves residue lysine 146. Lysine 158 bears the N6-acetyllysine; alternate mark. A Glycyl lysine isopeptide (Lys-Gly) (interchain with G-Cter in SUMO2); alternate cross-link involves residue lysine 158. A Phosphoserine modification is found at serine 159. Lysine 182 is covalently cross-linked (Glycyl lysine isopeptide (Lys-Gly) (interchain with G-Cter in SUMO2)). Phosphoserine is present on residues serine 201 and serine 233. Positions isoleucine 217 to alanine 244 are linker 2. Glycyl lysine isopeptide (Lys-Gly) (interchain with G-Cter in SUMO2) cross-links involve residues lysine 242 and lysine 262. A coil 2 region spans residues glutamine 245–glutamate 387. Residue lysine 272 is modified to N6-acetyllysine; alternate. Lysine 272 is covalently cross-linked (Glycyl lysine isopeptide (Lys-Gly) (interchain with G-Cter in SUMO2); alternate). Phosphoserine is present on residues serine 279 and serine 303. Lysine 313 is covalently cross-linked (Glycyl lysine isopeptide (Lys-Gly) (interchain with G-Cter in SUMO2)). At lysine 331 the chain carries N6-acetyllysine; alternate. Lysine 331 is covalently cross-linked (Glycyl lysine isopeptide (Lys-Gly) (interchain with G-Cter in SUMO2); alternate). Residues serine 376 and serine 394 each carry the phosphoserine modification. Positions arginine 388–methionine 588 are tail. The segment covering leucine 391–valine 410 has biased composition (low complexity). The tract at residues leucine 391 to isoleucine 433 is disordered. Threonine 400 is a glycosylation site (O-linked (GlcNAc) threonine). The residue at position 414 (arginine 414) is an Omega-N-methylarginine. The short motif at lysine 416 to aspartate 421 is the Nuclear localization signal element. The LTD domain maps to valine 431–phenylalanine 547. Lysine 484 is subject to N6-acetyllysine. Residue lysine 533 forms a Glycyl lysine isopeptide (Lys-Gly) (interchain with G-Cter in SUMO2) linkage. Serine 535 carries the post-translational modification Phosphoserine. Residue lysine 548 forms a Glycyl lysine isopeptide (Lys-Gly) (interchain with G-Cter in SUMO2) linkage. Cysteine 585 is subject to Cysteine methyl ester. Cysteine 585 carries S-farnesyl cysteine lipidation. Positions alanine 586–methionine 588 are cleaved as a propeptide — removed in mature form.

The protein belongs to the intermediate filament family. As to quaternary structure, homodimer. Lamin dimers then assemble into dimeric head-to-tail polymers. Ultimately, two head-to-tail polymers assemble laterally into a protofilament with a uniformly shaped rod of 3.5 nm in diameter. Interacts with SPAG4 and SEPT12. In terms of processing, B-type lamins undergo a series of modifications, such as farnesylation and phosphorylation. Increased phosphorylation of the lamins occurs before envelope disintegration and probably plays a role in regulating lamin associations. Post-translationally, phosphorylation plays a key role in lamin organization, subcellular localization and nuclear envelope disintegration. Phosphorylation by CDK1 at Ser-24 and Ser-394 at the onset of mitosis drives lamin disassembly and nuclear envelope breakdown.

The protein resides in the nucleus lamina. Lamins are intermediate filament proteins that assemble into a filamentous meshwork, and which constitute the major components of the nuclear lamina, a fibrous layer on the nucleoplasmic side of the inner nuclear membrane. Lamins provide a framework for the nuclear envelope, bridging the nuclear envelope and chromatin, thereby playing an important role in nuclear assembly, chromatin organization, nuclear membrane and telomere dynamics. The structural integrity of the lamina is strictly controlled by the cell cycle, as seen by the disintegration and formation of the nuclear envelope in prophase and telophase, respectively. This Mus musculus (Mouse) protein is Lamin-B1 (Lmnb1).